The primary structure comprises 253 residues: Imidazole glycerol phosphate synthase subunit HisF (253 aa).

Active-site residues include Asp-11 and Asp-130.

The protein belongs to the HisA/HisF family. Heterodimer of HisH and HisF.

The protein localises to the cytoplasm. The catalysed reaction is 5-[(5-phospho-1-deoxy-D-ribulos-1-ylimino)methylamino]-1-(5-phospho-beta-D-ribosyl)imidazole-4-carboxamide + L-glutamine = D-erythro-1-(imidazol-4-yl)glycerol 3-phosphate + 5-amino-1-(5-phospho-beta-D-ribosyl)imidazole-4-carboxamide + L-glutamate + H(+). It functions in the pathway amino-acid biosynthesis; L-histidine biosynthesis; L-histidine from 5-phospho-alpha-D-ribose 1-diphosphate: step 5/9. Functionally, IGPS catalyzes the conversion of PRFAR and glutamine to IGP, AICAR and glutamate. The HisF subunit catalyzes the cyclization activity that produces IGP and AICAR from PRFAR using the ammonia provided by the HisH subunit. This is Imidazole glycerol phosphate synthase subunit HisF from Caldanaerobacter subterraneus subsp. tengcongensis (strain DSM 15242 / JCM 11007 / NBRC 100824 / MB4) (Thermoanaerobacter tengcongensis).